Reading from the N-terminus, the 827-residue chain is SID1 transmembrane family member 1 (827 aa).

Positions 1-19 (MRGCLRLALLCALPWLLLA) are cleaved as a signal peptide. Residues 20–309 (ASPGHPAKSP…SIKESVYVKS (290 aa)) are Extracellular-facing. N-linked (GlcNAc...) asparagine glycans are attached at residues asparagine 57, asparagine 67, asparagine 83, asparagine 136, and asparagine 282. The helical transmembrane segment at 310–330 (SLFSVFIFLSFYLGCLLVGFV) threads the bilayer. At 331 to 442 (HYLRFQRKSI…DRRIVSKKYK (112 aa)) the chain is on the cytoplasmic side. The disordered stretch occupies residues 355-408 (ASHPIAASTPEGSNYGTIDESSSSPGRQMSSSDGGPPGQSDTDSSVEESDFDTM). The segment covering 364–374 (PEGSNYGTIDE) has biased composition (polar residues). The span at 375–397 (SSSSPGRQMSSSDGGPPGQSDTD) shows a compositional bias: low complexity. Positions 398–408 (SSVEESDFDTM) are enriched in acidic residues. The chain crosses the membrane as a helical span at residues 443–463 (IYFWNIITIAVFYALPVIQLV). Residues 464-494 (ITYQTVVNVTGNQDICYYNFLCAHPLGVLSA) lie on the Extracellular side of the membrane. N-linked (GlcNAc...) asparagine glycosylation is present at asparagine 471. A helical transmembrane segment spans residues 495-515 (FNNILSNLGHVLLGFLFLLIV). Topologically, residues 516-541 (LRRDILHRRALEAKDIFAVEYGIPKH) are cytoplasmic. The chain crosses the membrane as a helical span at residues 542–562 (FGLFYAMGIALMMEGVLSACY). Topologically, residues 563–572 (HVCPNYSNFQ) are extracellular. Residue asparagine 567 is glycosylated (N-linked (GlcNAc...) asparagine). A helical membrane pass occupies residues 573-590 (FDTSFMYMIAGLCMLKLY). Topologically, residues 591–600 (QTRHPDINAS) are cytoplasmic. A helical transmembrane segment spans residues 601–621 (AYSAYASFAVVIMVTVLGVVF). Over 622–626 (GKNDV) the chain is Extracellular. Residues 627 to 647 (WFWVIFSAIHVLASLALSTQI) traverse the membrane as a helical segment. Topologically, residues 648 to 683 (YYMGRFKIDLGIFRRAAMVFYTDCIQQCSRPLYMDR) are cytoplasmic. Residues 684 to 704 (MVLLVVGNLVNWSFALFGLIY) traverse the membrane as a helical segment. The Extracellular portion of the chain corresponds to 705–710 (RPRDFA). A helical transmembrane segment spans residues 711–731 (SYMLGIFICNLLLYLAFYIIM). Residues 732–741 (KLRSSEKVLP) lie on the Cytoplasmic side of the membrane. A helical membrane pass occupies residues 742–762 (VPLFCIVATAVMWAAALYFFF). The Extracellular segment spans residues 763 to 791 (QNLSSWEGTPAESREKNRECILLDFFDDH). Asparagine 764 carries N-linked (GlcNAc...) asparagine glycosylation. Residues 792 to 812 (DIWHFLSATALFFSFLVLLTL) form a helical membrane-spanning segment. The Cytoplasmic segment spans residues 813-827 (DDDLDVVRRDQIPVF).

Belongs to the SID1 family.

The protein localises to the membrane. Its function is as follows. In vitro binds long double-stranded RNA (dsRNA) (500 and 700 base pairs), but not dsRNA shorter than 300 bp. Not involved in RNA autophagy, a process in which RNA is directly imported into lysosomes in an ATP-dependent manner, and degraded. The chain is SID1 transmembrane family member 1 (SIDT1) from Homo sapiens (Human).